We begin with the raw amino-acid sequence, 268 residues long: N-formylmaleamate deformylase (268 aa).

An AB hydrolase-1 domain is found at 28 to 251 (ALILVPGITS…NAGHMIPWDD (224 aa)). Active-site charge relay system residues include serine 101, glutamate 221, and histidine 245.

The enzyme catalyses N-formylmaleamate + H2O = maleamate + formate + H(+). Its pathway is cofactor degradation; nicotinate degradation. In terms of biological role, deformylase that catalyzes the conversion of N-formylmaleamic acid to maleamate in the aerobic nicotinate degradation pathway. This is N-formylmaleamate deformylase (nicD) from Pseudomonas putida (strain ATCC 47054 / DSM 6125 / CFBP 8728 / NCIMB 11950 / KT2440).